An 801-amino-acid chain; its full sequence is Phenylalanine--tRNA ligase beta subunit (801 aa).

Residues 39–153 (AEGLSKLVVG…DEAVPGDAIF (115 aa)) form the tRNA-binding domain. A B5 domain is found at 406–481 (TEPVEVSTNL…RIYGYDKLPT (76 aa)). Asp459, Asp465, Glu468, and Glu469 together coordinate Mg(2+). Residues 708 to 801 (TKFPAMTRDI…LTEQVGAEVR (94 aa)) enclose the FDX-ACB domain.

Belongs to the phenylalanyl-tRNA synthetase beta subunit family. Type 1 subfamily. In terms of assembly, tetramer of two alpha and two beta subunits. Requires Mg(2+) as cofactor.

It is found in the cytoplasm. It catalyses the reaction tRNA(Phe) + L-phenylalanine + ATP = L-phenylalanyl-tRNA(Phe) + AMP + diphosphate + H(+). The protein is Phenylalanine--tRNA ligase beta subunit of Streptococcus pyogenes serotype M3 (strain SSI-1).